Consider the following 501-residue polypeptide: MLO-like protein 5 (501 aa).

Residues 1-22 are Extracellular-facing; it reads MAGGGGGSTSGEGPRELDQTPT. Residues 23–43 form a helical membrane-spanning segment; sequence WAVSTVCGVIILISIVLELMI. Over 44-68 the chain is Cytoplasmic; sequence HKIGEVFTERRKKALYEALQKIKNE. The helical transmembrane segment at 69-89 threads the bilayer; sequence LMVLGFISLLLTFGQNYIASL. Topologically, residues 90 to 151 are extracellular; it reads CVASRYGHAM…ISLNALHQVH (62 aa). A helical membrane pass occupies residues 152–172; sequence IFIFFLAVFHVIYSAITMMLG. Topologically, residues 173–273 are cytoplasmic; the sequence is RAKIRGWKVW…IKRSLEDDFK (101 aa). Residues 274–294 form a helical membrane-spanning segment; it reads VVVGISPELWAFVMLFLLFDV. His295 is a topological domain (extracellular). Residues 296-316 form a helical membrane-spanning segment; it reads GWYVTAVITMIPPLLTLAIGT. The Cytoplasmic portion of the chain corresponds to 317–359; sequence KLQAIISDMALEIQERHAVIQGMPLVNVSDRHFWFSRPALVLH. A helical membrane pass occupies residues 360 to 380; that stretch reads IIHFILFQNAFEITYFFWIWY. The Extracellular portion of the chain corresponds to 381–391; sequence EFGLRSCFHHH. The chain crosses the membrane as a helical span at residues 392-412; sequence FALIIIRVALGVGVQFLCSYI. Residues 413–501 lie on the Cytoplasmic side of the membrane; sequence TLPLYALVTQ…SQSRDLLSGP (89 aa). The tract at residues 443-501 is disordered; sequence WHKNAKKKSETPGQTQPPLPNLRPKTGGDIESASPANITASVDVKESDQSQSRDLLSGP. The tract at residues 450–471 is calmodulin-binding; sequence KSETPGQTQPPLPNLRPKTGGD. Positions 491 to 501 are enriched in polar residues; sequence QSQSRDLLSGP.

This sequence belongs to the MLO family.

It is found in the membrane. Its function is as follows. May be involved in modulation of pathogen defense and leaf cell death. Activity seems to be regulated by Ca(2+)-dependent calmodulin binding and seems not to require heterotrimeric G proteins. This chain is MLO-like protein 5 (MLO5), found in Arabidopsis thaliana (Mouse-ear cress).